Consider the following 438-residue polypeptide: Dolichyl-diphosphooligosaccharide--protein glycosyltransferase 48 kDa subunit (438 aa).

The N-terminal stretch at 1–25 (MASLRLSVLLVSVSWLLLLVSGLRA) is a signal peptide. Residues 26–408 (GPRTLVLMEN…QYERFIPSAY (383 aa)) are Lumenal-facing. The helical transmembrane segment at 409-429 (PYYASAFSVMFGLFIFSIVFL) threads the bilayer. The Cytoplasmic segment spans residues 430–438 (HMKEKEKSD).

Belongs to the DDOST 48 kDa subunit family. As to quaternary structure, component of the oligosaccharyltransferase (OST) complex.

The protein resides in the endoplasmic reticulum membrane. The protein operates within protein modification; protein glycosylation. Subunit of the oligosaccharyl transferase (OST) complex that catalyzes the initial transfer of a defined glycan (Glc(3)Man(9)GlcNAc(2) in eukaryotes) from the lipid carrier dolichol-pyrophosphate to an asparagine residue within an Asn-X-Ser/Thr consensus motif in nascent polypeptide chains, the first step in protein N-glycosylation. N-glycosylation occurs cotranslationally and the complex associates with the Sec61 complex at the channel-forming translocon complex that mediates protein translocation across the endoplasmic reticulum (ER). All subunits are required for a maximal enzyme activity. Required for the assembly of both SST3A- and SS3B-containing OST complexes. The chain is Dolichyl-diphosphooligosaccharide--protein glycosyltransferase 48 kDa subunit from Xenopus laevis (African clawed frog).